Consider the following 173-residue polypeptide: Cytochrome c-type biogenesis protein CcmE (173 aa).

Over 1–8 (MNPRRKSR) the chain is Cytoplasmic. The chain crosses the membrane as a helical; Signal-anchor for type II membrane protein span at residues 9-29 (FKLVIFVVLGIAIASGLMLYA). Residues 30-173 (LRQNIDLFYT…RDRQEKEGAK (144 aa)) are Periplasmic-facing. Heme contacts are provided by histidine 131 and tyrosine 135. The tract at residues 139–173 (ELGEKMQKVHKPMGIKAADLKGESERDRQEKEGAK) is disordered. Residues 156–173 (ADLKGESERDRQEKEGAK) are compositionally biased toward basic and acidic residues.

Belongs to the CcmE/CycJ family.

Its subcellular location is the cell inner membrane. Heme chaperone required for the biogenesis of c-type cytochromes. Transiently binds heme delivered by CcmC and transfers the heme to apo-cytochromes in a process facilitated by CcmF and CcmH. The polypeptide is Cytochrome c-type biogenesis protein CcmE (Haemophilus influenzae (strain 86-028NP)).